Here is a 182-residue protein sequence, read N- to C-terminus: Adenine phosphoribosyltransferase (182 aa).

The protein belongs to the purine/pyrimidine phosphoribosyltransferase family. In terms of assembly, homodimer.

It localises to the cytoplasm. It catalyses the reaction AMP + diphosphate = 5-phospho-alpha-D-ribose 1-diphosphate + adenine. The protein operates within purine metabolism; AMP biosynthesis via salvage pathway; AMP from adenine: step 1/1. Its function is as follows. Catalyzes a salvage reaction resulting in the formation of AMP, that is energically less costly than de novo synthesis. In Pseudomonas aeruginosa (strain LESB58), this protein is Adenine phosphoribosyltransferase.